The following is a 224-amino-acid chain: Vacuolar protein-sorting-associated protein 24 (224 aa).

Residue K203 forms a Glycyl lysine isopeptide (Lys-Gly) (interchain with G-Cter in ubiquitin) linkage.

Belongs to the SNF7 family. As to quaternary structure, core component of the ESCRT-III complex (endosomal sorting required for transport complex III). ESCRT-III appears to be sequentially assembled as a flat lattice on the endosome membrane and forms a transient 450 kDa complex that contains DID4, oligomerized SNF7, VPS20 and VPS24. SNF7 oligomerization into a membrane-associated filament is nucleated by association of SNF7 with VPS20; the process is terminated through association of VPS24, possibly by capping the SNF7 filament. VPS24 subsequently associates with DID4/VPS2. Interacts with the VPS4. Interacts with DID2.

It is found in the endosome membrane. The protein resides in the endomembrane system. Its function is as follows. Class E VPS protein implicated in concentration and sorting of cargo proteins of the multivesicular body (MVB) for incorporation into intralumenal vesicles. The lumenal sequestrated membrane proteins will be targeted into the vacuole after fusion of the endosome with the vacuole. Acts a component of the ESCRT-III complex, which appears to be critical for late steps in MVB sorting, such as membrane invagination and final cargo sorting and recruitment oflate-acting components of the sorting machinery. The MVB pathway requires the sequential function of ESCRT-O, -I,-II and -III complex assemblies. The DID4/VPS2-VPS24 subcomplex is required for the VPS4-dependent dissociation of ESCRT-III. The sequence is that of Vacuolar protein-sorting-associated protein 24 (VPS24) from Saccharomyces cerevisiae (strain ATCC 204508 / S288c) (Baker's yeast).